A 65-amino-acid chain; its full sequence is Alpha-toxin BeM10 (65 aa).

An LCN-type CS-alpha/beta domain is found at 2–65 (RDGYIADDKD…IKQKVSGKCN (64 aa)). 4 disulfides stabilise this stretch: C12-C64, C16-C35, C22-C45, and C26-C47.

The protein belongs to the long (4 C-C) scorpion toxin superfamily. Sodium channel inhibitor family. Alpha subfamily. In terms of tissue distribution, expressed by the venom gland.

The protein resides in the secreted. Its function is as follows. Alpha toxins bind voltage-independently at site-3 of sodium channels (Nav) and inhibit the inactivation of the activated channels, thereby blocking neuronal transmission. Has paralytic activity in mice. This chain is Alpha-toxin BeM10, found in Mesobuthus eupeus (Lesser Asian scorpion).